Reading from the N-terminus, the 879-residue chain is Alanine--tRNA ligase (879 aa).

H566, H570, C668, and H672 together coordinate Zn(2+).

The protein belongs to the class-II aminoacyl-tRNA synthetase family. Requires Zn(2+) as cofactor.

The protein localises to the cytoplasm. The catalysed reaction is tRNA(Ala) + L-alanine + ATP = L-alanyl-tRNA(Ala) + AMP + diphosphate. Its function is as follows. Catalyzes the attachment of alanine to tRNA(Ala) in a two-step reaction: alanine is first activated by ATP to form Ala-AMP and then transferred to the acceptor end of tRNA(Ala). Also edits incorrectly charged Ser-tRNA(Ala) and Gly-tRNA(Ala) via its editing domain. This Clostridium kluyveri (strain ATCC 8527 / DSM 555 / NBRC 12016 / NCIMB 10680 / K1) protein is Alanine--tRNA ligase.